The sequence spans 275 residues: NH(3)-dependent NAD(+) synthetase (275 aa).

Residue 46–53 participates in ATP binding; it reads GISGGQDS. Aspartate 52 lines the Mg(2+) pocket. A deamido-NAD(+)-binding site is contributed by arginine 140. Threonine 160 lines the ATP pocket. Glutamate 165 contributes to the Mg(2+) binding site. Deamido-NAD(+) contacts are provided by lysine 173 and aspartate 180. ATP is bound by residues lysine 189 and threonine 211. 260–261 contacts deamido-NAD(+); the sequence is HK.

This sequence belongs to the NAD synthetase family. In terms of assembly, homodimer.

It carries out the reaction deamido-NAD(+) + NH4(+) + ATP = AMP + diphosphate + NAD(+) + H(+). The protein operates within cofactor biosynthesis; NAD(+) biosynthesis; NAD(+) from deamido-NAD(+) (ammonia route): step 1/1. Its function is as follows. Catalyzes the ATP-dependent amidation of deamido-NAD to form NAD. Uses ammonia as a nitrogen source. This chain is NH(3)-dependent NAD(+) synthetase, found in Salmonella enteritidis PT4 (strain P125109).